The chain runs to 428 residues: MKNWKTLLLGIAMIANTSFAAPQVVDKVAAVVNNGVVLESDVDGLMQSVKLNAGQAGQQLPDDATLRHQILERLIMDQIILQMGQKMGVKITDEQLDQAIANIAKQNNMTMDQMRSRLAYDGLNYSTYRNQIRKEMIISEVRNNEVRRRITVLPQEVDALAKQIGTQNDASTELNLSHILIALPENPTSEQVNDAQRQAESIVEEARNGADFGKLAITYSADQQALKGGQMGWGRIQELPGIFAQALSTAKKGDIVGPIRSGVGFHILKVNDLRGQSQSISVTEVHARHILLKPSPIMNDQQARLKLEEIAADIKSGKTTFAAAAKEYSQDPGSANQGGDLGWATPDIFDPAFRDALTKLHKGQISAPVHSSFGWHLIELLDTRKVDKTDAAQKDRAYRMLMNRKFSEEAATWMQEQRASAYVKILSN.

The N-terminal stretch at 1-20 (MKNWKTLLLGIAMIANTSFA) is a signal peptide. PpiC domains are found at residues 171-272 (STEL…KVND) and 282-382 (VTEV…ELLD).

The protein localises to the periplasm. The catalysed reaction is [protein]-peptidylproline (omega=180) = [protein]-peptidylproline (omega=0). In terms of biological role, chaperone involved in the correct folding and assembly of outer membrane proteins. Recognizes specific patterns of aromatic residues and the orientation of their side chains, which are found more frequently in integral outer membrane proteins. May act in both early periplasmic and late outer membrane-associated steps of protein maturation. In Salmonella paratyphi A (strain ATCC 9150 / SARB42), this protein is Chaperone SurA.